A 170-amino-acid chain; its full sequence is MQLDEQRLRFRDAMASLSAAVNIITTEGDAGQCGITATAVCSVTDTPPSLMVCINANSAMNPVFQGNGKLCVNVLNHEQELMARHFAGMTGMAMEERFSLSCWQKGPLAQPVLKGSLASLEGEIRDVQAIGTHLVYLVEIKNIILSAEGHGLIYFKRRFHPVMLEMEAAI.

Belongs to the non-flavoprotein flavin reductase family. HpaC subfamily. Homodimer. 4-HPA 3-monooxygenase consists of a reductase component HpaC and an oxygenase component HpaB.

It catalyses the reaction a reduced flavin + NAD(+) = an oxidized flavin + NADH + 2 H(+). The protein operates within aromatic compound metabolism; 4-hydroxyphenylacetate degradation; pyruvate and succinate semialdehyde from 4-hydroxyphenylacetate: step 1/7. Catalyzes the reduction of free flavins (FMN, FAD and riboflavin) by NADH. Subsequently, the reduced flavins diffuse to the large HpaB component or to other electron acceptors such as cytochrome c and Fe(3+) ion. In Escherichia coli, this protein is 4-hydroxyphenylacetate 3-monooxygenase reductase component (hpaC).